Consider the following 381-residue polypeptide: Queuine tRNA-ribosyltransferase (381 aa).

Asp96 serves as the catalytic Proton acceptor. Substrate is bound by residues 96-100 (DSGGF), Asp150, Gln193, and Gly220. The interval 251–257 (GVGSPDA) is RNA binding. Residue Asp270 is the Nucleophile of the active site. Residues 275–279 (TRIAR) are RNA binding; important for wobble base 34 recognition. Cys308, Cys310, Cys313, and His339 together coordinate Zn(2+).

The protein belongs to the queuine tRNA-ribosyltransferase family. As to quaternary structure, homodimer. Within each dimer, one monomer is responsible for RNA recognition and catalysis, while the other monomer binds to the replacement base PreQ1. It depends on Zn(2+) as a cofactor.

The catalysed reaction is 7-aminomethyl-7-carbaguanine + guanosine(34) in tRNA = 7-aminomethyl-7-carbaguanosine(34) in tRNA + guanine. It participates in tRNA modification; tRNA-queuosine biosynthesis. Functionally, catalyzes the base-exchange of a guanine (G) residue with the queuine precursor 7-aminomethyl-7-deazaguanine (PreQ1) at position 34 (anticodon wobble position) in tRNAs with GU(N) anticodons (tRNA-Asp, -Asn, -His and -Tyr). Catalysis occurs through a double-displacement mechanism. The nucleophile active site attacks the C1' of nucleotide 34 to detach the guanine base from the RNA, forming a covalent enzyme-RNA intermediate. The proton acceptor active site deprotonates the incoming PreQ1, allowing a nucleophilic attack on the C1' of the ribose to form the product. After dissociation, two additional enzymatic reactions on the tRNA convert PreQ1 to queuine (Q), resulting in the hypermodified nucleoside queuosine (7-(((4,5-cis-dihydroxy-2-cyclopenten-1-yl)amino)methyl)-7-deazaguanosine). This is Queuine tRNA-ribosyltransferase from Bacillus subtilis (strain 168).